The sequence spans 116 residues: Large ribosomal subunit protein uL18 (116 aa).

The protein belongs to the universal ribosomal protein uL18 family. Part of the 50S ribosomal subunit; part of the 5S rRNA/L5/L18/L25 subcomplex. Contacts the 5S and 23S rRNAs.

In terms of biological role, this is one of the proteins that bind and probably mediate the attachment of the 5S RNA into the large ribosomal subunit, where it forms part of the central protuberance. This chain is Large ribosomal subunit protein uL18, found in Shewanella halifaxensis (strain HAW-EB4).